A 464-amino-acid polypeptide reads, in one-letter code: E3 ubiquitin-protein ligase parkin (464 aa).

A Ubiquitin-like domain is found at 1–76 (MIVFVRFNSS…VHIVQRPRRR (76 aa)). Ser-65 is modified (phosphoserine; by PINK1). A disordered region spans residues 70-96 (VQRPRRRSHETNASGGDEPQSTSEGSI). Residues 77-236 (SHETNASGGD…LITSNRRSIP (160 aa)) are necessary for PINK1-dependent localization to mitochondria. Position 80 is a phosphothreonine (Thr-80). Polar residues predominate over residues 80–96 (TNASGGDEPQSTSEGSI). The RING-type 0; atypical zinc finger occupies 140–224 (PTYNSFFIYC…PTSDKDTSVA (85 aa)). At Thr-174 the chain carries Phosphothreonine; by PINK1. The segment at 203-237 (TRAEFFFKCGAHPTSDKDTSVALNLITSNRRSIPC) is SYT11 binding 1. A Phosphothreonine modification is found at Thr-216. The interval 233 to 464 (RSIPCIACTD…ACMGDHWFDV (232 aa)) is TRIAD supradomain. Positions 237, 240, 252, 256, 259, 262, 288, 292, 331, and 336 each coordinate Zn(2+). An RING-type 1 zinc finger spans residues 237-292 (CIACTDVRSPVLVFQCNHRHVICLDCFHLYCVTRLNDRQFVHDAQLGYSLPCVAGC). The SYT11 binding 2 stretch occupies residues 256–292 (HVICLDCFHLYCVTRLNDRQFVHDAQLGYSLPCVAGC). The segment at 312-376 (TRYQQYGAEE…CKEAYHEGDC (65 aa)) adopts an IBR-type zinc-finger fold. Lys-348 is covalently cross-linked (Glycyl lysine isopeptide (Lys-Gly) (interchain with G-Cter in ISG15)). Residues Cys-351, Cys-359, Cys-364, and Cys-367 each coordinate Zn(2+). Lys-368 participates in a covalent cross-link: Glycyl lysine isopeptide (Lys-Gly) (interchain with G-Cter in ISG15). Residues His-372 and Cys-376 each contribute to the Zn(2+) site. Positions 377 to 409 (DSLLEPSGATSQAYRVDKRAAEQARWEEASKET) are REP. Zn(2+) contacts are provided by Cys-417 and Cys-420. Residues 417 to 448 (CPRCNVPIEKNGGCMHMKCPQPQCKLEWCWNC) form an RING-type 2; atypical zinc finger. The active site involves Cys-430. Zn(2+)-binding residues include Cys-435, Cys-440, Cys-445, Cys-448, Cys-456, and His-460.

The protein belongs to the RBR family. Parkin subfamily. Forms an E3 ubiquitin ligase complex with UBE2L3 or UBE2L6. Mediates 'Lys-63'-linked polyubiquitination by associating with UBE2V1. Part of a SCF-like complex, consisting of PRKN, CUL1 and FBXW7. Interacts with SNCAIP. Binds to the C2A and C2B domains of SYT11. Interacts and regulates the turnover of SEPTIN5. Part of a complex, including STUB1, HSP70 and GPR37. The amount of STUB1 in the complex increases during ER stress. STUB1 promotes the dissociation of HSP70 from PRKN and GPR37, thus facilitating PRKN-mediated GPR37 ubiquitination. HSP70 transiently associates with unfolded GPR37 and inhibits the E3 activity of PRKN, whereas, STUB1 enhances the E3 activity of PRKN through promotion of dissociation of HSP70 from PRKN-GPR37 complexes. Interacts with PSMD4 and PACRG. Interacts with LRRK2. Interacts with RANBP2. Interacts with SUMO1 but not SUMO2, which promotes nuclear localization and autoubiquitination. Interacts (via first RING-type domain) with AIMP2 (via N-terminus). Interacts with PSMA7 and RNF41. Interacts with PINK1. Forms a complex with PINK1 and PARK7. Interacts with CHPF, the interaction with isoform 2 may facilitate PRKN transport into the mitochondria. Interacts with MFN2 (phosphorylated), promotes PRKN localization in dysfunctional depolarized mitochondria. Interacts with FBXO7; this promotes translocation to dysfunctional depolarized mitochondria. Interacts with ZNF746. Interacts with heat shock protein 70 family members, including HSPA1L, HSPA1A and HSPA8; interaction HSPA1L promotes translocation to damaged mitochondria. Interacts with BAG4 and, to a lesser extent, BAG5; interaction with BAG4 inhibits translocation to damaged mitochondria. Forms a complex with PRKN and PARK7. Interacts with AMBRA1. In terms of processing, auto-ubiquitinates in an E2-dependent manner leading to its own degradation. Also polyubiquitinated by RNF41 for proteasomal degradation. Post-translationally, S-nitrosylated. Phosphorylated. Activation requires phosphorylation at Ser-65 by PINK1 and binding to PINK1 phosphorylated ubiquitin. Phosphorylation at Thr-174 by PINK1 and at Thr-216 is important for mitochondrial localization. Expressed in all subdivisions of the brain (at protein level). Highly expressed in brainstem, cranial nerve, pontine, cerebellar nuclei, indusium griseum, nuclei reticularis, strata oriens and laccunosum moleculare of the hippocampal CA2 region. Low levels were found in the telencephalon and diencephalon. Expressed in heart, liver, skeletal muscle, kidney and testis.

Its subcellular location is the cytoplasm. It localises to the cytosol. It is found in the nucleus. The protein localises to the endoplasmic reticulum. The protein resides in the mitochondrion. Its subcellular location is the mitochondrion outer membrane. It localises to the cell projection. It is found in the neuron projection. The protein localises to the postsynaptic density. The protein resides in the presynapse. It carries out the reaction [E2 ubiquitin-conjugating enzyme]-S-ubiquitinyl-L-cysteine + [acceptor protein]-L-lysine = [E2 ubiquitin-conjugating enzyme]-L-cysteine + [acceptor protein]-N(6)-ubiquitinyl-L-lysine.. Its pathway is protein modification; protein ubiquitination. With respect to regulation, in the autoinhibited state the side chain of Phe-462 inserts into a hydrophobic groove in RING-0, occluding the ubiquitin acceptor site Cys-430, whereas the REP repressor element binds RING-1 and blocks its E2-binding site. Activation of PRKN requires 2 steps: (1) phosphorylation at Ser-65 by PINK1 and (2) binding to phosphorylated ubiquitin, leading to unlock repression of the catalytic Cys-430 by the RING-0 region via an allosteric mechanism and converting PRKN to its fully-active form. According to another report, phosphorylation at Ser-65 by PINK1 is not essential for activation and only binding to phosphorylated ubiquitin is essential to unlock repression. In addition, ISG15 conjugation positively regulates its ubiquitin E3 ligase activity by suppressing the intramolecular interaction that maintains its autoinhibited conformation. Functions within a multiprotein E3 ubiquitin ligase complex, catalyzing the covalent attachment of ubiquitin moieties onto substrate proteins. Substrates include SYT11 and VDAC1. Other substrates are BCL2, CCNE1, GPR37, RHOT1/MIRO1, MFN1, MFN2, STUB1, SNCAIP, SEPTIN5, TOMM20, USP30, ZNF746, MIRO1 and AIMP2. Mediates monoubiquitination as well as 'Lys-6', 'Lys-11', 'Lys-48'-linked and 'Lys-63'-linked polyubiquitination of substrates depending on the context. Participates in the removal and/or detoxification of abnormally folded or damaged protein by mediating 'Lys-63'-linked polyubiquitination of misfolded proteins such as PARK7: 'Lys-63'-linked polyubiquitinated misfolded proteins are then recognized by HDAC6, leading to their recruitment to aggresomes, followed by degradation. Mediates 'Lys-63'-linked polyubiquitination of a 22 kDa O-linked glycosylated isoform of SNCAIP, possibly playing a role in Lewy-body formation. Mediates monoubiquitination of BCL2, thereby acting as a positive regulator of autophagy. Protects against mitochondrial dysfunction during cellular stress, by acting downstream of PINK1 to coordinate mitochondrial quality control mechanisms that remove and replace dysfunctional mitochondrial components. Depending on the severity of mitochondrial damage and/or dysfunction, activity ranges from preventing apoptosis and stimulating mitochondrial biogenesis to regulating mitochondrial dynamics and eliminating severely damaged mitochondria via mitophagy. Activation and recruitment onto the outer membrane of damaged/dysfunctional mitochondria (OMM) requires PINK1-mediated phosphorylation of both PRKN and ubiquitin. After mitochondrial damage, functions with PINK1 to mediate the decision between mitophagy or preventing apoptosis by inducing either the poly- or monoubiquitination of VDAC1, respectively; polyubiquitination of VDAC1 promotes mitophagy, while monoubiquitination of VDAC1 decreases mitochondrial calcium influx which ultimately inhibits apoptosis. When cellular stress results in irreversible mitochondrial damage, promotes the autophagic degradation of dysfunctional depolarized mitochondria (mitophagy) by promoting the ubiquitination of mitochondrial proteins such as TOMM20, RHOT1/MIRO1, MFN1 and USP30. Preferentially assembles 'Lys-6'-, 'Lys-11'- and 'Lys-63'-linked polyubiquitin chains, leading to mitophagy. The PINK1-PRKN pathway also promotes fission of damaged mitochondria by PINK1-mediated phosphorylation which promotes the PRKN-dependent degradation of mitochondrial proteins involved in fission such as MFN2. This prevents the refusion of unhealthy mitochondria with the mitochondrial network or initiates mitochondrial fragmentation facilitating their later engulfment by autophagosomes. Regulates motility of damaged mitochondria via the ubiquitination and subsequent degradation of MIRO1 and MIRO2; in motor neurons, this likely inhibits mitochondrial intracellular anterograde transport along the axons which probably increases the chance of the mitochondria undergoing mitophagy in the soma. Involved in mitochondrial biogenesis via the 'Lys-48'-linked polyubiquitination of transcriptional repressor ZNF746/PARIS which leads to its subsequent proteasomal degradation and allows activation of the transcription factor PPARGC1A. Limits the production of reactive oxygen species (ROS). Regulates cyclin-E during neuronal apoptosis. In collaboration with CHPF isoform 2, may enhance cell viability and protect cells from oxidative stress. Independently of its ubiquitin ligase activity, protects from apoptosis by the transcriptional repression of p53/TP53. May protect neurons against alpha synuclein toxicity, proteasomal dysfunction, GPR37 accumulation, and kainate-induced excitotoxicity. May play a role in controlling neurotransmitter trafficking at the presynaptic terminal and in calcium-dependent exocytosis. May represent a tumor suppressor gene. The protein is E3 ubiquitin-protein ligase parkin of Mus musculus (Mouse).